The chain runs to 125 residues: Snaclec B7 (125 aa).

3 disulfide bridges follow: C2/C13, C30/C119, and C96/C111. In terms of domain architecture, C-type lectin spans 9-120 (HEGHCYKVFK…CNISQYFVCQ (112 aa)). N-linked (GlcNAc...) asparagine glycosylation occurs at N112.

The protein belongs to the snaclec family. In terms of assembly, heterodimer; disulfide-linked. As to expression, expressed by the venom gland.

The protein localises to the secreted. Functionally, interferes with one step of hemostasis (modulation of platelet aggregation, or coagulation cascade, for example). This Macrovipera lebetinus (Levantine viper) protein is Snaclec B7.